The sequence spans 1302 residues: RNA-directed RNA polymerase (1302 aa).

In terms of domain architecture, RdRp catalytic spans 562–823; sequence VIVGDLEATG…QTHAKQGCYV (262 aa).

Belongs to the reoviridae RNA-directed RNA polymerase family.

The catalysed reaction is RNA(n) + a ribonucleoside 5'-triphosphate = RNA(n+1) + diphosphate. The sequence is that of RNA-directed RNA polymerase (Segment-1) from Antilocapra americana (Pronghorn).